We begin with the raw amino-acid sequence, 1287 residues long: MTIPDPANIIHNDAGTASPHHIWADVGDSTSSSQHEATRSRSDDANGGASASMHAPQHVKANRAAQPTYDSSDLPSFGLSARLTRDSSSFGSKPSSSASDSRRPKFAPYEAENLWATSSTTSHPSKASQSTLSPNASVFKPSRSLQPNHFEPHAVANVHDFDDPLNSAYSSDTVSPRPDHAPLDHEQPQQPSALDPVAVSKVEEQRGDHSIPHQNGLVSAQAQTASDAVSTSKYTTEAADQEEDQDDFVYPGADSPSSGQAAVQDEQQAVTDSQTTKSLTKQESDPEASSTSLSAPAEAEHIVVGSAAEQSLTSSAPAETAVHIDYDTLAQLCSRGPLSDLQSFFHTAQESGLSMFSLSNDPNPGNGLVPLHFAAKDGKTDIVRWLITQAGAIVEMEDREGETALHKAAMAGKLSVASLLLSHGADANAQDADGWTALHNACSRGYLDLVRLLVDRGHAQIDVQGGRGAWTPLMNAASKGHLPVVRHLTAKYHADPFVRNAAGETAFDVAAATFEVYICEILERYEAERWNASKFTTSSPSRSGAIVPGRGPYEPLALHTTIPVILHENQRLDTRLQTLALNGGKPRWSSSSAARAHKPDRRSPSSMPPGPLAPSRTRHVPMRQDDVGLPTRSLPYKLRLRSRVGPAAARRRAAALAAQHTPNPQDCHDDDLASTPTPESVLQARRGTSSVNGASAQHADAESSHFWLCEWQLDTTHPLVDVEHGWQYAQSFDALDDKWSSQPPPPLERLLEGRGLSASVTRAITGGAGFANAQAEQEISSSSWVRRRRWIRVLRRRLDIEFGDDLEACEGATGAGAEHLVLSSESQSNGDGSHGLSTAAIMAAQEAAKSECSQLGPDADYVSRAKALAGPSAASGATPADAMGADRDELARRIARLVMANTELRAAFEDDDVERRSRAEELRKEYALQLGQLREAAGLDEDEDEDAADDDDDEFIYPNSYKDDGASVFTRLVNGETSGTLSRPSLSQRQSSAASMLRNSVAPSEAGTSLAAARSADLAANREFRVPTNEAPNKVVLRHGPTMREQNLQPQWQRDEEAKDCIGCGRHFTFFLRKHHCRRCGRIFCDACSSKRAQLRMAELVVDPSLPSMAASEVLAPTRVCNGCHAELQLPPQLQNMRGADAMMAASRSRGADEVSGRSILETQLEDGAFRSTLAPPSDVSSRASELTECPVCSTTLSALGGSEEQEAHVRNCLENGGGGSMQGGRYLVYKLPEDSPIVGKECSICMEDFVANSTIARLPCLCYFHRGCIDSWFKRGRECPVHARDW.

The interval 1 to 298 (MTIPDPANII…SSTSLSAPAE (298 aa)) is disordered. Residues 86–99 (DSSSFGSKPSSSAS) are compositionally biased toward low complexity. Residues 115-136 (WATSSTTSHPSKASQSTLSPNA) show a composition bias toward polar residues. A PAM2 motif is present at residues 128-144 (SQSTLSPNASVFKPSRS). Composition is skewed to basic and acidic residues over residues 177–187 (RPDHAPLDHEQ) and 201–211 (KVEEQRGDHSI). Residues 212–235 (PHQNGLVSAQAQTASDAVSTSKYT) are compositionally biased toward polar residues. Residues 239–253 (ADQEEDQDDFVYPGA) carry the PAM2L 1 motif. Polar residues predominate over residues 255 to 294 (SPSSGQAAVQDEQQAVTDSQTTKSLTKQESDPEASSTSLS). ANK repeat units follow at residues 366–395 (NGLV…AIVE), 400–429 (EGET…DANA), 433–463 (DGWT…QIDV), and 468–497 (GAWT…ADPF). Disordered stretches follow at residues 582 to 630 (NGGK…VGLP), 643 to 697 (RVGP…ASAQ), 934 to 960 (REAA…YPNS), and 977 to 1005 (TSGT…APSE). The segment covering 674–695 (STPTPESVLQARRGTSSVNGAS) has biased composition (polar residues). The segment covering 938 to 955 (GLDEDEDEDAADDDDDEF) has biased composition (acidic residues). A PAM2L 2 motif is present at residues 941–960 (EDEDEDAADDDDDEFIYPNS). Residues 981-995 (LSRPSLSQRQSSAAS) are compositionally biased toward low complexity. An FYVE-type zinc finger spans residues 1055–1129 (DEEAKDCIGC…VCNGCHAELQ (75 aa)). Cys-1061, Cys-1064, Cys-1077, Cys-1080, Cys-1085, Cys-1088, Cys-1121, and Cys-1124 together coordinate Zn(2+). The RING-type; atypical zinc finger occupies 1243–1283 (CSICMEDFVANSTIARLPCLCYFHRGCIDSWFKRGRECPVH).

Belongs to the UPA1 PAM2 domain-binding protein family. In terms of assembly, part of large ribonucleoprotein complexes (mRNPs) containing RNA-binding proteins RRM4 and PAB1, endosome-binding protein UPA1, core scaffold protein UPA2 and associated factor GRP1. Interacts (via PAM2 motif) with PAB1 (via PABC domain). Interacts (via PAM2L motifs) with RRM4.

The protein localises to the cytoplasm. It is found in the cytoskeleton. The protein resides in the endosome. Its function is as follows. FYVE zinc finger domain protein that functions in endosomal targeting and transport of mRNAs, as well as associated ribosomes. The endosomal mRNA transport regulates polarity of the infectious hyphae by transporting a broad spectrum of cargo mRNAs from the nucleus to cell poles. Involved in chitinase CTS1 secretion. Dispensable for general endosomal functions but crucial for endosomal recruitment of RRM4. This chain is FYVE zinc finger domain protein UPA1, found in Mycosarcoma maydis (Corn smut fungus).